A 411-amino-acid chain; its full sequence is Putative ion-transport protein YfeO (411 aa).

Transmembrane regions (helical) follow at residues 9 to 29 (MLLL…VLIA), 54 to 74 (DSPF…GLII), 99 to 119 (ALPG…SLGP), 149 to 169 (ILAS…AALI), 186 to 206 (LFAP…FFHP), 223 to 243 (IASG…AVWC), 258 to 278 (VLIL…GGPL), 296 to 316 (LGAG…VIAA), 322 to 342 (GGRI…LHAH), 343 to 363 (VEAV…VLVV), and 386 to 406 (LLCI…LLAA).

Belongs to the chloride channel (TC 2.A.49) family.

It is found in the cell membrane. In Salmonella paratyphi A (strain ATCC 9150 / SARB42), this protein is Putative ion-transport protein YfeO.